A 202-amino-acid chain; its full sequence is Complement component C8 gamma chain (202 aa).

The N-terminal stretch at 1–23 is a signal peptide; it reads MVLRGRAVLLAVLLAAGSLGRWA. A disulfide bond links C96 and C188. A glycan (N-linked (GlcNAc...) asparagine) is linked at N173.

This sequence belongs to the calycin superfamily. Lipocalin family. As to quaternary structure, heterotrimer of 3 chains: alpha (C8A), beta (C8B) and gamma (C8G); the alpha and gamma chains are disulfide bonded. Component of the membrane attack complex (MAC), composed of complement C5b, C6, C7, C8A, C8B, C8G and multiple copies of the pore-forming subunit C9.

The protein resides in the secreted. It localises to the target cell membrane. Membrane attack complex (MAC) assembly is inhibited by CD59, thereby protecting self-cells from damage during complement activation. MAC assembly is also inhibited by clusterin (CLU) chaperones that inhibit polymerization of C9. Component of the membrane attack complex (MAC), a multiprotein complex activated by the complement cascade, which inserts into a target cell membrane and forms a pore, leading to target cell membrane rupture and cell lysis. The MAC is initiated by proteolytic cleavage of C5 into complement C5b in response to the classical, alternative, lectin and GZMK complement pathways. The complement pathways consist in a cascade of proteins that leads to phagocytosis and breakdown of pathogens and signaling that strengthens the adaptive immune system. C8G, together with C8A and C8B, inserts into the target membrane, but does not form pores by itself. During MAC assembly, associates with C5b, C6 and C7 to form the C5b8 intermediate complex that inserts into the target membrane and traverses the bilayer increasing membrane rigidity. In Oryctolagus cuniculus (Rabbit), this protein is Complement component C8 gamma chain (C8G).